Reading from the N-terminus, the 515-residue chain is Bifunctional purine biosynthesis protein PurH (515 aa).

The MGS-like domain occupies Met1–Val145.

Belongs to the PurH family.

It carries out the reaction (6R)-10-formyltetrahydrofolate + 5-amino-1-(5-phospho-beta-D-ribosyl)imidazole-4-carboxamide = 5-formamido-1-(5-phospho-D-ribosyl)imidazole-4-carboxamide + (6S)-5,6,7,8-tetrahydrofolate. The enzyme catalyses IMP + H2O = 5-formamido-1-(5-phospho-D-ribosyl)imidazole-4-carboxamide. It participates in purine metabolism; IMP biosynthesis via de novo pathway; 5-formamido-1-(5-phospho-D-ribosyl)imidazole-4-carboxamide from 5-amino-1-(5-phospho-D-ribosyl)imidazole-4-carboxamide (10-formyl THF route): step 1/1. Its pathway is purine metabolism; IMP biosynthesis via de novo pathway; IMP from 5-formamido-1-(5-phospho-D-ribosyl)imidazole-4-carboxamide: step 1/1. This chain is Bifunctional purine biosynthesis protein PurH, found in Streptococcus agalactiae serotype III (strain NEM316).